The primary structure comprises 170 residues: Ribosome maturation factor RimM (170 aa).

Positions 96-169 (EGEFYACDVE…VVQLATLEGL (74 aa)) constitute a PRC barrel domain.

The protein belongs to the RimM family. As to quaternary structure, binds ribosomal protein uS19.

The protein localises to the cytoplasm. Its function is as follows. An accessory protein needed during the final step in the assembly of 30S ribosomal subunit, possibly for assembly of the head region. Essential for efficient processing of 16S rRNA. May be needed both before and after RbfA during the maturation of 16S rRNA. It has affinity for free ribosomal 30S subunits but not for 70S ribosomes. The sequence is that of Ribosome maturation factor RimM from Sorangium cellulosum (strain So ce56) (Polyangium cellulosum (strain So ce56)).